A 571-amino-acid polypeptide reads, in one-letter code: Phototropic-responsive NPH3 family protein NPY1 (571 aa).

Positions 29 to 97 (SDVTIHVGEV…CYGMTVTLNA (69 aa)) constitute a BTB domain. The 259-residue stretch at 210–468 (DWWVEDVCEL…VQVLYFEQLR (259 aa)) folds into the NPH3 domain. Tyrosine 409 bears the Phosphotyrosine mark. Positions 475–571 (ASVAASSHSP…SSRRRRHSIS (97 aa)) are disordered. The span at 484–504 (PVEKTEENKGEEATKKVELSK) shows a compositional bias: basic and acidic residues. The segment covering 540–562 (SNKSSEVSSGSSQSPPAKSSSSS) has biased composition (low complexity).

This sequence belongs to the NPH3 family. In terms of assembly, component of a complex made of PINs (e.g. PIN1 and PIN2), MAB4/MELs (e.g. NPY1/MAB4 and NPY5/MEL1) and AGC kinases (e.g. D6PK and PID) at the plasma membrane. Binds directly to PIN2 and PID. In terms of tissue distribution, accumulates in organ primordia such as cotyledons, leaves and floral organs. Expressed mainly in the apical regions of embryos including cotyledon tips and the apical meristem. Induced by the transcription factor ARF5/MP at the periphery of inflorescence meristems. Highly expressed in primary root tips and radicles.

Its subcellular location is the late endosome. The protein resides in the cell membrane. It localises to the cytoplasm. It is found in the cytosol. It functions in the pathway protein modification; protein ubiquitination. In terms of biological role, may act as a substrate-specific adapter of an E3 ubiquitin-protein ligase complex (CUL3-RBX1-BTB) which mediates the ubiquitination and subsequent proteasomal degradation of target proteins. Coregulates with PID the auxin-mediated plant organogenesis. Regulates basipetal PIN proteins (e.g. PIN1) polarization to establish inward auxin transport from the L1 surface of incipient organ primordia; this process is essential for the progression of flower organs development. Recruited to the plasma membrane by PINs (e.g. PIN1 and PIN2) and, in concert with AGC kinases-mediated (e.g. D6PK and PID) PINs phosphorylation, maintains their cell polarity (apical or basal) through limiting lateral diffusion-based escape. Induces auxin response in inner cell layers through a shift in PIN1 localization. Influences cotyledon development by regulating auxin distribution mainly in the protodermal cell layer. May play an essential role in root gravitropic responses. The polypeptide is Phototropic-responsive NPH3 family protein NPY1 (Arabidopsis thaliana (Mouse-ear cress)).